We begin with the raw amino-acid sequence, 334 residues long: Sucrose operon repressor (334 aa).

The HTH lacI-type domain maps to 6–63 (VTIKDIAELAGVSKATASLVLNGRGKELRVAQETRERVLAIAREQHYQPSIHARSLRD). Positions 8-27 (IKDIAELAGVSKATASLVLN) form a DNA-binding region, H-T-H motif.

In terms of biological role, repressor for the scr operon. Binds D-fructose as an inducer. This chain is Sucrose operon repressor (scrR), found in Klebsiella pneumoniae.